A 307-amino-acid polypeptide reads, in one-letter code: Thiamine-monophosphate kinase (307 aa).

Positions 26, 37, 38, and 39 each coordinate Mg(2+). His-46 is a substrate binding site. Mg(2+) is bound by residues Asp-68 and Asp-117. ATP-binding positions include 116-117 and Arg-140; that span reads GD. A Mg(2+)-binding site is contributed by Asp-207. Thr-209 serves as a coordination point for ATP. Residue Asp-210 coordinates Mg(2+). Residues Glu-254 and Phe-304 each contribute to the substrate site.

The protein belongs to the thiamine-monophosphate kinase family.

The enzyme catalyses thiamine phosphate + ATP = thiamine diphosphate + ADP. Its pathway is cofactor biosynthesis; thiamine diphosphate biosynthesis; thiamine diphosphate from thiamine phosphate: step 1/1. Catalyzes the ATP-dependent phosphorylation of thiamine-monophosphate (TMP) to form thiamine-pyrophosphate (TPP), the active form of vitamin B1. In Leptospira interrogans serogroup Icterohaemorrhagiae serovar Lai (strain 56601), this protein is Thiamine-monophosphate kinase.